The chain runs to 320 residues: Beta-carotene 3-hydroxylase, chloroplastic (320 aa).

The transit peptide at 1 to 78 (METQFLVSGR…EKELRGKLVV (78 aa)) directs the protein to the chloroplast. The next 2 membrane-spanning stretches (helical) occupy residues 118-138 (YLVA…LSVY) and 152-172 (LSEM…MEFW). Residues 165–292 (AAVGMEFWAR…KFNGVPYGLF (128 aa)) form the Fatty acid hydroxylase domain. The Histidine box-1 signature appears at 177–182 (HEALWH). Residues 189–193 (HESHH) carry the Histidine box-2 motif. 2 consecutive transmembrane segments (helical) span residues 204–224 (DIFA…GFFH) and 228–248 (IPGL…AYMF). A Histidine box-3 motif is present at residues 250 to 255 (HDGLVH). The short motif at 276–280 (HTLHH) is the Histidine box-4 element.

The protein belongs to the sterol desaturase family.

The protein localises to the plastid. The protein resides in the chloroplast membrane. It carries out the reaction all-trans-beta-carotene + 4 reduced [2Fe-2S]-[ferredoxin] + 2 O2 + 4 H(+) = all-trans-zeaxanthin + 4 oxidized [2Fe-2S]-[ferredoxin] + 2 H2O. Its function is as follows. Nonheme diiron monooxygenase involved in the biosynthesis of xanthophylls. Specific for beta-ring hydroxylations of beta-carotene. Uses ferredoxin as an electron donor. This Gentiana lutea (Yellow gentian) protein is Beta-carotene 3-hydroxylase, chloroplastic (BHY).